Here is a 397-residue protein sequence, read N- to C-terminus: Tryptophan synthase beta chain 1 (397 aa).

Lys94 carries the post-translational modification N6-(pyridoxal phosphate)lysine.

Belongs to the TrpB family. In terms of assembly, tetramer of two alpha and two beta chains. The cofactor is pyridoxal 5'-phosphate.

The enzyme catalyses (1S,2R)-1-C-(indol-3-yl)glycerol 3-phosphate + L-serine = D-glyceraldehyde 3-phosphate + L-tryptophan + H2O. It functions in the pathway amino-acid biosynthesis; L-tryptophan biosynthesis; L-tryptophan from chorismate: step 5/5. Functionally, the beta subunit is responsible for the synthesis of L-tryptophan from indole and L-serine. This is Tryptophan synthase beta chain 1 (trpB1) from Archaeoglobus fulgidus (strain ATCC 49558 / DSM 4304 / JCM 9628 / NBRC 100126 / VC-16).